The following is a 287-amino-acid chain: Undecaprenyl-diphosphatase (287 aa).

6 helical membrane-spanning segments follow: residues 50–70 (PGVS…IAYF), 99–119 (IAMA…KLFW), 128–148 (LRSV…LAVA), 206–226 (FLLG…DALA), 231–251 (AGPL…WLAI), and 263–283 (TWLF…WWSI).

It belongs to the UppP family.

Its subcellular location is the cell inner membrane. The enzyme catalyses di-trans,octa-cis-undecaprenyl diphosphate + H2O = di-trans,octa-cis-undecaprenyl phosphate + phosphate + H(+). In terms of biological role, catalyzes the dephosphorylation of undecaprenyl diphosphate (UPP). Confers resistance to bacitracin. The protein is Undecaprenyl-diphosphatase of Parasynechococcus marenigrum (strain WH8102).